Reading from the N-terminus, the 76-residue chain is Vasotab (76 aa).

Residues 1–20 (MKFALFSVLVVLLIATFVAA) form the signal peptide. The 56-residue stretch at 21–76 (DECPRICTADYRPVCGTPSGGRRSANRTFGNQCSLNAHNCLNKGDTYDKLHDGECK) folds into the Kazal-like domain. Cystine bridges form between Cys-23–Cys-60, Cys-27–Cys-53, and Cys-35–Cys-75.

Expressed by the salivary gland.

Its subcellular location is the secreted. Its function is as follows. Vasodilator protein that inhibits vasoconstriction of isolated rat femoral artery induced by phenylephrine. Since platelet aggregation and vasoconstriction are key hemostatic responses, particularly in small wounds, this protein likely participates in the antihemostatic responses during blood feeding. Blocks L-type calcium channels (Cav1/CACNA1) in left ventricular myocytes isolated from rat hearts. The polypeptide is Vasotab (Hybomitra bimaculata (Horse fly)).